Consider the following 104-residue polypeptide: MMNNEHDNFQKEVETTTETTFNREEGKRMVRPLFKRSKKYCRFCAIGQLRIDLIDDLEALKRFLSPYAKINPRRITGNCQMHQRHVAKALKRARYLALVPFVKD.

The span at methionine 1–glutamate 14 shows a compositional bias: basic and acidic residues. A disordered region spans residues methionine 1–glutamate 25.

Belongs to the bacterial ribosomal protein bS18 family. In terms of assembly, part of the 30S ribosomal subunit. Forms a tight heterodimer with protein bS6.

Functionally, binds as a heterodimer with protein bS6 to the central domain of the 16S rRNA, where it helps stabilize the platform of the 30S subunit. The chain is Small ribosomal subunit protein bS18 from Mycoplasma pneumoniae (strain ATCC 29342 / M129 / Subtype 1) (Mycoplasmoides pneumoniae).